The sequence spans 428 residues: MTHTRSHTLFDQARRIIPGGVNSPVRAFKSVGADPLFIKRASGSKIFDEDNNTYIDYVGSWGPMILGHCFPEVVNAVKQCMENGSSFGAPTELEITLAQMVIDAMPSIEMVRMVSSGTEATMSAIRLARGYTGRDKILKFSGCYHGHADALLVKAGSGAATFGVPDSPGVPADFAKHTLTAEYNSLASVKTLITENSGQIACIILEPVAGNMGTVPPRPGFLEGLRELCTNEGIILIFDEVMSGFRVAYGGAQSLYGVTPDMTTLGKIIGGGLPVGAFGGKREIMEKLSPSGGVYQAGTLSGNPLAMTAGIETLKFLQQPGFYDRLEEKSSQLSEGISLAARDAGYPLYSTRVGSMFCAFFTPHEVFDWTTAAACDTKAFARYFLAMLEEGVYLAPSQFETAFMSAAHSQQDIEATIAAARKCFKLIR.

The residue at position 267 (K267) is an N6-(pyridoxal phosphate)lysine.

It belongs to the class-III pyridoxal-phosphate-dependent aminotransferase family. HemL subfamily. In terms of assembly, homodimer. Requires pyridoxal 5'-phosphate as cofactor.

The protein localises to the cytoplasm. The catalysed reaction is (S)-4-amino-5-oxopentanoate = 5-aminolevulinate. Its pathway is porphyrin-containing compound metabolism; protoporphyrin-IX biosynthesis; 5-aminolevulinate from L-glutamyl-tRNA(Glu): step 2/2. This is Glutamate-1-semialdehyde 2,1-aminomutase from Trichlorobacter lovleyi (strain ATCC BAA-1151 / DSM 17278 / SZ) (Geobacter lovleyi).